A 372-amino-acid chain; its full sequence is Glutamate 5-kinase (372 aa).

K14 is an ATP binding site. Substrate contacts are provided by S54, D141, and N153. 173 to 174 (TD) serves as a coordination point for ATP. The PUA domain occupies 280–358 (RGHVVIDAGA…GEIESVLGYM (79 aa)).

The protein belongs to the glutamate 5-kinase family.

The protein resides in the cytoplasm. It catalyses the reaction L-glutamate + ATP = L-glutamyl 5-phosphate + ADP. Its pathway is amino-acid biosynthesis; L-proline biosynthesis; L-glutamate 5-semialdehyde from L-glutamate: step 1/2. Catalyzes the transfer of a phosphate group to glutamate to form L-glutamate 5-phosphate. This chain is Glutamate 5-kinase, found in Burkholderia multivorans (strain ATCC 17616 / 249).